A 153-amino-acid chain; its full sequence is uncharacterized protein (153 aa).

Disordered regions lie at residues 24–87 and 101–153; these read PEDS…DRPL and GDPR…RIPS. The segment covering 27–37 has biased composition (low complexity); sequence SSCPCPRLPLS. Basic and acidic residues predominate over residues 143–153; that stretch reads TRKESSCRIPS.

This is an uncharacterized protein from Dryophytes versicolor (chameleon treefrog).